The primary structure comprises 147 residues: MDNNNNKKLFNTHGSAFDDSKIYFRDVDCGVLCFNIHNEQSFNNLNHWMSLFNENVPFVLIGTKSDIERTEKSISKERIEQWCKQIEDQGIVKEKIHYFETSAKLSTNIIEAYETIVKIALNQYKNKQKNSINISIEPEKPKGICWW.

Residues 11–15 (NTHGS) and 63–66 (TKSD) contribute to the GTP site. Cys-145 carries the S-geranylgeranyl cysteine lipid modification.

This sequence belongs to the small GTPase superfamily. Rab family.

The protein localises to the cell membrane. The polypeptide is Ras-related protein RabK2 (rabK2) (Dictyostelium discoideum (Social amoeba)).